Reading from the N-terminus, the 151-residue chain is UPF0756 membrane protein Dred_1097 (151 aa).

The next 4 helical transmembrane spans lie at 6-26 (IILLSLILMGYLAESALLATA), 52-72 (VGLIFLMLSVLVPLAHDNIVY), 75-95 (LVMKTLSPQGLLALIGGTLAT), and 111-131 (LIFGMVIGSLIGIVFLGGIPI).

It belongs to the UPF0756 family.

The protein resides in the cell membrane. This is UPF0756 membrane protein Dred_1097 from Desulforamulus reducens (strain ATCC BAA-1160 / DSM 100696 / MI-1) (Desulfotomaculum reducens).